The sequence spans 475 residues: MERSTTSDTASEKPNPSHSTGAVQMRIKNANSHHDRLSQSKSMILSDNVKVLEPINRHRRNHSQHNLTLADIISTPDHTVVEKEGYLLKAKIADGGKKLRKNWSTSWIVLTSRKMEFYKESKQPALANLKPGYKPECVDLCGAHIEWTPEKSSRKNVFQITTVSGNEFLLQSDIDFLILDWFHAIKNAIDRLPKERSCTSRNLEFKLRRSSSTELLNSLDTESKESKPEHRKSLIFRLNYSASDSNDRSRVKSRLKKFISRRPSLKTLQEKGLIKDQIFGSHLHLVCEHENSTVPQFVRQCIKAVERRGLEVDGIYRVSGNLATIQKLRFVVNQEEKLNLDDSQWEDIHVVTGALKMFFRELPEPLFPYCFFEQFVEAIKIQDNATRIKAVKTLVKKLPRPNYDTMKVLFEHLKKIAAKESVNLMSTQSLGIVFGPTLLRPEKETGNMAVHMLYQNQIVELMLSEYSKIFGSEED.

Positions methionine 1–alanine 22 are disordered. The region spanning valine 80–aspartate 190 is the PH domain. The Rho-GAP domain occupies serine 281 to phenylalanine 470.

The protein localises to the cytoplasm. The protein resides in the membrane. Its function is as follows. GTPase activator for the Rho-type GTPases by converting them to an inactive GDP-bound state. This Gallus gallus (Chicken) protein is Rho GTPase-activating protein 15 (ARHGAP15).